The following is a 241-amino-acid chain: Glucosamine-6-phosphate deaminase (241 aa).

The Proton acceptor; for enolization step role is filled by Asp-67. The active-site For ring-opening step is Asn-136. The active-site Proton acceptor; for ring-opening step is the His-138. Catalysis depends on Glu-143, which acts as the For ring-opening step.

Belongs to the glucosamine/galactosamine-6-phosphate isomerase family. NagB subfamily.

It carries out the reaction alpha-D-glucosamine 6-phosphate + H2O = beta-D-fructose 6-phosphate + NH4(+). It functions in the pathway amino-sugar metabolism; N-acetylneuraminate degradation; D-fructose 6-phosphate from N-acetylneuraminate: step 5/5. Its function is as follows. Catalyzes the reversible isomerization-deamination of glucosamine 6-phosphate (GlcN6P) to form fructose 6-phosphate (Fru6P) and ammonium ion. This is Glucosamine-6-phosphate deaminase from Bacillus velezensis (strain DSM 23117 / BGSC 10A6 / LMG 26770 / FZB42) (Bacillus amyloliquefaciens subsp. plantarum).